Consider the following 291-residue polypeptide: Bifunctional protein FolD 1 (291 aa).

Residues 167–169 (GAS), Ile192, and Ile233 each bind NADP(+).

Belongs to the tetrahydrofolate dehydrogenase/cyclohydrolase family. As to quaternary structure, homodimer.

The catalysed reaction is (6R)-5,10-methylene-5,6,7,8-tetrahydrofolate + NADP(+) = (6R)-5,10-methenyltetrahydrofolate + NADPH. It catalyses the reaction (6R)-5,10-methenyltetrahydrofolate + H2O = (6R)-10-formyltetrahydrofolate + H(+). It participates in one-carbon metabolism; tetrahydrofolate interconversion. Catalyzes the oxidation of 5,10-methylenetetrahydrofolate to 5,10-methenyltetrahydrofolate and then the hydrolysis of 5,10-methenyltetrahydrofolate to 10-formyltetrahydrofolate. This Pseudomonas putida (strain ATCC 47054 / DSM 6125 / CFBP 8728 / NCIMB 11950 / KT2440) protein is Bifunctional protein FolD 1.